Here is an 83-residue protein sequence, read N- to C-terminus: Ferredoxin (83 aa).

4Fe-4S ferredoxin-type domains follow at residues 2–29 (ALMI…QGDE) and 31–64 (YVIE…KDPS). Residues C9, C12, C15, C19, C38, C41, C50, and C54 each coordinate [4Fe-4S] cluster.

[4Fe-4S] cluster serves as cofactor.

Ferredoxins are iron-sulfur proteins that transfer electrons in a wide variety of metabolic reactions. The chain is Ferredoxin (fdx) from Allochromatium vinosum (strain ATCC 17899 / DSM 180 / NBRC 103801 / NCIMB 10441 / D) (Chromatium vinosum).